The primary structure comprises 101 residues: Small ribosomal subunit protein uS14 (101 aa).

This sequence belongs to the universal ribosomal protein uS14 family. Part of the 30S ribosomal subunit. Contacts proteins S3 and S10.

Functionally, binds 16S rRNA, required for the assembly of 30S particles and may also be responsible for determining the conformation of the 16S rRNA at the A site. This chain is Small ribosomal subunit protein uS14, found in Shewanella piezotolerans (strain WP3 / JCM 13877).